We begin with the raw amino-acid sequence, 73 residues long: MAIKEWIITQLSKLTKNKITEESLFSEIGIDSLDLVEHVSDLEQHFDIEISDEELLNIKKVNDIIVLIEQKSK.

Positions 1 to 72 (MAIKEWIITQ…DIIVLIEQKS (72 aa)) constitute a Carrier domain. At Ser32 the chain carries O-(pantetheine 4'-phosphoryl)serine.

Post-translationally, 4'-phosphopantetheine is transferred from CoA to a specific serine of the apo-ACP-like protein.

Its pathway is lipid metabolism; fatty acid biosynthesis. Carrier of the growing fatty acid chain in fatty acid biosynthesis. In Mycoplasmopsis pulmonis (strain UAB CTIP) (Mycoplasma pulmonis), this protein is Acyl carrier protein homolog.